A 135-amino-acid chain; its full sequence is Large-conductance mechanosensitive channel (135 aa).

The next 2 helical transmembrane spans lie at 10–30 (FAMR…AAFG) and 76–96 (GVFI…FLAI).

Belongs to the MscL family. As to quaternary structure, homopentamer.

The protein localises to the cell inner membrane. Channel that opens in response to stretch forces in the membrane lipid bilayer. May participate in the regulation of osmotic pressure changes within the cell. The polypeptide is Large-conductance mechanosensitive channel (Cronobacter sakazakii (strain ATCC BAA-894) (Enterobacter sakazakii)).